Reading from the N-terminus, the 151-residue chain is Large ribosomal subunit protein uL23m (151 aa).

Residues 120 to 143 (DDKKSLEDAKKNHKKFLDKNKDRP) are compositionally biased toward basic and acidic residues. Residues 120–151 (DDKKSLEDAKKNHKKFLDKNKDRPGTPGWFSI) are disordered.

This sequence belongs to the universal ribosomal protein uL23 family. As to quaternary structure, component of the mitochondrial ribosome large subunit (39S) which comprises a 16S rRNA and about 50 distinct proteins.

The protein localises to the mitochondrion. The chain is Large ribosomal subunit protein uL23m (mRpL23) from Anopheles gambiae (African malaria mosquito).